The chain runs to 730 residues: Diacylglycerol kinase alpha (730 aa).

2 consecutive EF-hand domains span residues Arg-111–Val-146 and Glu-156–Leu-191. The Ca(2+) site is built by Asp-124, Asp-126, Asn-128, Glu-135, Asp-169, Asp-171, Ser-173, Ser-175, and Glu-180. 2 consecutive Phorbol-ester/DAG-type zinc fingers follow at residues Asn-206–Cys-254 and Ser-270–Cys-320. In terms of domain architecture, DAGKc spans Ser-368–Pro-501. Position 479 is an N6-acetyllysine (Lys-479).

The protein belongs to the eukaryotic diacylglycerol kinase family. As to quaternary structure, monomer.

The protein resides in the cytoplasm. Its subcellular location is the cytosol. The enzyme catalyses a 1,2-diacyl-sn-glycerol + ATP = a 1,2-diacyl-sn-glycero-3-phosphate + ADP + H(+). It carries out the reaction a 1-O-alkyl-sn-glycerol + ATP = a 1-O-alkyl-sn-glycero-3-phosphate + ADP + H(+). The catalysed reaction is 1-O-alkyl-2-acyl-sn-glycerol + ATP = 1-O-alkyl-2-acyl-sn-glycero-3-phosphate + ADP + H(+). It catalyses the reaction 1,2-dihexadecanoyl-sn-glycerol + ATP = 1,2-dihexadecanoyl-sn-glycero-3-phosphate + ADP + H(+). The enzyme catalyses 1-hexadecanoyl-2-(9Z-octadecenoyl)-sn-glycerol + ATP = 1-hexadecanoyl-2-(9Z-octadecenoyl)-sn-glycero-3-phosphate + ADP + H(+). It carries out the reaction 2-(9Z-octadecenoyl)-glycerol + ATP = 2-(9Z-octadecenoyl)-sn-glycero-3-phosphate + ADP + H(+). The catalysed reaction is 1,2-di-(9Z-octadecenoyl)-sn-glycerol + ATP = 1,2-di-(9Z-octadecenoyl)-sn-glycero-3-phosphate + ADP + H(+). It catalyses the reaction 1-octadecanoyl-2-(5Z,8Z,11Z,14Z-eicosatetraenoyl)-sn-glycerol + ATP = 1-octadecanoyl-2-(5Z,8Z,11Z,14Z-eicosatetraenoyl)-sn-glycero-3-phosphate + ADP + H(+). The enzyme catalyses 1,2-didecanoyl-sn-glycerol + ATP = 1,2-didecanoyl-sn-glycero-3-phosphate + ADP + H(+). It carries out the reaction 1-O-hexadecyl-2-acetyl-sn-glycerol + ATP = 1-O-hexadecyl-2-acetyl-sn-glycero-3-phosphate + ADP + H(+). The catalysed reaction is 1-O-hexadecyl-2-(5Z,8Z,11Z,14Z-eicosatetraenoyl)-sn-glycerol + ATP = 1-O-hexadecyl-2-(5Z,8Z,11Z,14Z-eicosatetraenoyl)-sn-glycero-3-phosphate + ADP + H(+). It catalyses the reaction 1-O-hexadecyl-2-(9Z-octadecenoyl)-sn-glycerol + ATP = 1-O-hexadecyl-2-(9Z-octadecenoyl)-sn-glycero-3-phosphate + ADP + H(+). The enzyme catalyses 1-O-hexadecyl-sn-glycerol + ATP = 1-O-hexadecyl-sn-glycero-3-phosphate + ADP + H(+). It functions in the pathway lipid metabolism; glycerolipid metabolism. With respect to regulation, stimulated by calcium and phosphatidylserine. Diacylglycerol kinase that converts diacylglycerol/DAG into phosphatidic acid/phosphatidate/PA and regulates the respective levels of these two bioactive lipids. Thereby, acts as a central switch between the signaling pathways activated by these second messengers with different cellular targets and opposite effects in numerous biological processes. Also plays an important role in the biosynthesis of complex lipids. Can also phosphorylate 1-alkyl-2-acylglycerol in vitro as efficiently as diacylglycerol provided it contains an arachidonoyl group. Also involved in the production of alkyl-lysophosphatidic acid, another bioactive lipid, through the phosphorylation of 1-alkyl-2-acetyl glycerol. This Mus musculus (Mouse) protein is Diacylglycerol kinase alpha (Dgka).